Consider the following 305-residue polypeptide: Heme A synthase (305 aa).

Over 1-6 (MKKFLK) the chain is Cytoplasmic. The chain crosses the membrane as a helical span at residues 7–27 (VWSVLTIICMTVVVFGGALVT). The Extracellular portion of the chain corresponds to 28 to 63 (KTGSADGCGNSWPLCNGQLVRLTDVTPEKLIEFMHR). A disulfide bond links Cys-35 and Cys-42. Residue Glu-59 is part of the active site. His-62 lines the heme o pocket. The chain crosses the membrane as a helical span at residues 64–84 (MTTGISSIFVIVLAICAWIYM). The Cytoplasmic segment spans residues 85–92 (KNRRETKP). Residues 93–113 (LAIIAVLFLIIQALMGMAAVV) form a helical membrane-spanning segment. Over 114–122 (WGQNPYIMA) the chain is Extracellular. A helical transmembrane segment spans residues 123-143 (LHFGISIICYASIVLLALMIF). His-124 is a binding site for heme o. At 144–160 (EVDRKFDARNLVMGTKL) the chain is on the cytoplasmic side. A helical transmembrane segment spans residues 161-181 (RINIYALTIYTYLAVYTGALV). The Extracellular portion of the chain corresponds to 182 to 212 (RHEKASMAVPVWPFENGHFIMPTSVQDYVQY). A helical membrane pass occupies residues 213–233 (FHRLAAFILIVWLLYVTWLVF). A heme b-binding site is contributed by His-214. Over 234–240 (RDYRRYR) the chain is Cytoplasmic. Residues 241–261 (VLTFSMVLSLVFIALQAVTGA) form a helical membrane-spanning segment. The Extracellular segment spans residues 262–271 (LSVYTGVNLY). Residues 272-292 (IALAHSLIITMLFALLCYLCL) traverse the membrane as a helical segment. Residue His-276 participates in heme b binding. The Cytoplasmic portion of the chain corresponds to 293–305 (LASRSKSNRLRIK).

The protein belongs to the COX15/CtaA family. Type 1 subfamily. In terms of assembly, interacts with CtaB. Requires heme b as cofactor.

The protein resides in the cell membrane. The catalysed reaction is Fe(II)-heme o + 2 A + H2O = Fe(II)-heme a + 2 AH2. The protein operates within porphyrin-containing compound metabolism; heme A biosynthesis; heme A from heme O: step 1/1. Functionally, catalyzes the conversion of heme O to heme A by two successive hydroxylations of the methyl group at C8. The first hydroxylation forms heme I, the second hydroxylation results in an unstable dihydroxymethyl group, which spontaneously dehydrates, resulting in the formyl group of heme A. This is Heme A synthase from Listeria monocytogenes serotype 4b (strain F2365).